The following is a 309-amino-acid chain: Pantothenate kinase (309 aa).

92–99 contributes to the ATP binding site; it reads GSVAVGKS.

This sequence belongs to the prokaryotic pantothenate kinase family.

The protein resides in the cytoplasm. It carries out the reaction (R)-pantothenate + ATP = (R)-4'-phosphopantothenate + ADP + H(+). Its pathway is cofactor biosynthesis; coenzyme A biosynthesis; CoA from (R)-pantothenate: step 1/5. The sequence is that of Pantothenate kinase from Latilactobacillus sakei subsp. sakei (strain 23K) (Lactobacillus sakei subsp. sakei).